Consider the following 199-residue polypeptide: Elongation factor Ts (199 aa).

The tract at residues 80–83 (TDFV) is involved in Mg(2+) ion dislocation from EF-Tu.

This sequence belongs to the EF-Ts family.

The protein localises to the cytoplasm. In terms of biological role, associates with the EF-Tu.GDP complex and induces the exchange of GDP to GTP. It remains bound to the aminoacyl-tRNA.EF-Tu.GTP complex up to the GTP hydrolysis stage on the ribosome. In Thermodesulfovibrio yellowstonii (strain ATCC 51303 / DSM 11347 / YP87), this protein is Elongation factor Ts.